Consider the following 209-residue polypeptide: Large ribosomal subunit protein uL3 (209 aa).

Residues 133-153 (THGNSLSHRAPGSIGQNQTPG) form a disordered region. The residue at position 150 (Gln150) is an N5-methylglutamine.

This sequence belongs to the universal ribosomal protein uL3 family. As to quaternary structure, part of the 50S ribosomal subunit. Forms a cluster with proteins L14 and L19. Post-translationally, methylated by PrmB.

One of the primary rRNA binding proteins, it binds directly near the 3'-end of the 23S rRNA, where it nucleates assembly of the 50S subunit. This Pectobacterium atrosepticum (strain SCRI 1043 / ATCC BAA-672) (Erwinia carotovora subsp. atroseptica) protein is Large ribosomal subunit protein uL3.